We begin with the raw amino-acid sequence, 415 residues long: Serine hydroxymethyltransferase (415 aa).

(6S)-5,6,7,8-tetrahydrofolate contacts are provided by residues Leu120 and 124-126 (GHL). Lys229 carries the N6-(pyridoxal phosphate)lysine modification.

It belongs to the SHMT family. Homodimer. Requires pyridoxal 5'-phosphate as cofactor.

It is found in the cytoplasm. The enzyme catalyses (6R)-5,10-methylene-5,6,7,8-tetrahydrofolate + glycine + H2O = (6S)-5,6,7,8-tetrahydrofolate + L-serine. The protein operates within one-carbon metabolism; tetrahydrofolate interconversion. It participates in amino-acid biosynthesis; glycine biosynthesis; glycine from L-serine: step 1/1. In terms of biological role, catalyzes the reversible interconversion of serine and glycine with tetrahydrofolate (THF) serving as the one-carbon carrier. This reaction serves as the major source of one-carbon groups required for the biosynthesis of purines, thymidylate, methionine, and other important biomolecules. Also exhibits THF-independent aldolase activity toward beta-hydroxyamino acids, producing glycine and aldehydes, via a retro-aldol mechanism. This chain is Serine hydroxymethyltransferase, found in Caldicellulosiruptor bescii (strain ATCC BAA-1888 / DSM 6725 / KCTC 15123 / Z-1320) (Anaerocellum thermophilum).